The following is a 225-amino-acid chain: Sirohydrochlorin ferrochelatase, chloroplastic (225 aa).

A chloroplast-targeting transit peptide spans 1–46; it reads MTTQSQFLVNLSYGGLASQSNLRANNRVSPSSCQITRTNRSWALPV. The Fe cation site is built by His-89 and His-155. [4Fe-4S] cluster-binding residues include Cys-199, Cys-210, Cys-213, and Cys-219.

Belongs to the CbiX family. SirB subfamily. Homodimer. Requires [4Fe-4S] cluster as cofactor.

The protein resides in the plastid. It is found in the chloroplast. The catalysed reaction is siroheme + 2 H(+) = sirohydrochlorin + Fe(2+). Its pathway is porphyrin-containing compound metabolism; siroheme biosynthesis; siroheme from sirohydrochlorin: step 1/1. Functionally, chelates iron to the siroheme precursor. Catalyzes the last step of the siroheme biosynthesis. Unlike its counterparts in bacteria, contains an [Fe-S] cluster which is not involved directly in the enzymatic reaction, but may play regulatory role in iron, sulfur and tetrapyrrole metabolism. The [Fe-S] cluster is required for normal plant growth. The polypeptide is Sirohydrochlorin ferrochelatase, chloroplastic (Arabidopsis thaliana (Mouse-ear cress)).